We begin with the raw amino-acid sequence, 108 residues long: Glutaredoxin-C10 (108 aa).

Residues 1–107 enclose the Glutaredoxin domain; sequence MERVAKLASE…PMLKNAGALW (107 aa). Residues Cys21 and Cys24 are joined by a disulfide bond. A Responsive for interaction with TGA factors motif is present at residues 105–108; the sequence is ALWL.

Belongs to the glutaredoxin family. CC-type subfamily.

It localises to the cytoplasm. The protein resides in the nucleus. Has a glutathione-disulfide oxidoreductase activity in the presence of NADPH and glutathione reductase. Reduces low molecular weight disulfides and proteins. The protein is Glutaredoxin-C10 (GRXC10) of Oryza sativa subsp. japonica (Rice).